A 622-amino-acid polypeptide reads, in one-letter code: Cytochrome c oxidase subunit 1 (622 aa).

The Extracellular segment spans residues 1–27 (MLNALTEKRTRGSMLWDYLTTVDHKKI). A helical transmembrane segment spans residues 28 to 46 (AILYLVAGGFFFLVGGIEA). The Cytoplasmic portion of the chain corresponds to 47 to 68 (MFIRIQLAKPENAFLSAQAYNE). Residues 69 to 88 (VMTMHGTTMIFLAAMPLLFA) form a helical membrane-spanning segment. His73 contributes to the Fe(II)-heme a binding site. The Extracellular portion of the chain corresponds to 89 to 110 (LMNAVVPLQIGARDVSFPFLNA). The chain crosses the membrane as a helical span at residues 111–128 (LGFWLFFFGGIFLNLSWF). Over 129 to 159 (LGGAPDAGWTSYASLSLHSKGHGIDFFVLGL) the chain is Cytoplasmic. The chain crosses the membrane as a helical span at residues 160-178 (QISGLGTLIAGINFLATII). At 179 to 196 (NMRAPGMTYMRLPLFTWT) the chain is on the extracellular side. Residues 197-215 (TFVASALILFAFPPLTVGL) form a helical membrane-spanning segment. The Cytoplasmic segment spans residues 216–241 (ALMMLDRLFGTNFFNPELGGNTVIWE). The helical transmembrane segment at 242–261 (HLFWIFGHPEVYILILPAFG) threads the bilayer. The Cu cation site is built by His249 and Tyr253. The segment at residues 249–253 (HPEVY) is a cross-link (1'-histidyl-3'-tyrosine (His-Tyr)). The Extracellular portion of the chain corresponds to 262-284 (IFSEVIPVFARKRLFGYSSMVFA). The helical transmembrane segment at 285–304 (IVLIGFLGFMVWVHHMFTTG) threads the bilayer. Cu cation is bound by residues His298 and His299. The Cytoplasmic portion of the chain corresponds to 305 to 312 (LGPIANAI). A helical transmembrane segment spans residues 313–331 (FAVATMAIAIPTGIKIFNW). The Extracellular segment spans residues 332 to 346 (LLTIWGGNVKYTTAM). Residues 347 to 366 (LYAVSFIPSFVLGGVTGVML) form a helical membrane-spanning segment. Over 367 to 374 (AAAAADYQ) the chain is Cytoplasmic. Residues 375-394 (FHDTYFVVAHFHYVIIGGVV) form a helical membrane-spanning segment. Residue His384 coordinates heme a3. His386 contacts Fe(II)-heme a. Residues 395–421 (FGLLAGVHFWWPKMFGKILHETMGKIS) are Extracellular-facing. The chain crosses the membrane as a helical span at residues 422 to 441 (FVLFFIGFHLTFFIQHFVGL). At 442–459 (MGMPRRVYTFLPGQGLET) the chain is on the cytoplasmic side. The chain crosses the membrane as a helical span at residues 460–479 (GNLISTIGAFFMAAAVILLL). At 480–552 (VNVIWTSVKG…EPVDDIHMPN (73 aa)) the chain is on the extracellular side. Residues 553 to 572 (GSILPLIISFGLFVAAFGLL) form a helical membrane-spanning segment. The Cytoplasmic segment spans residues 573–580 (YRSDYAWG). Residues 581–604 (LPVIFIGLGITFITMLLRSVIDDH) traverse the membrane as a helical segment. The Cytoplasmic portion of the chain corresponds to 605–622 (GYHIHKEELPNDDKGVKA).

The protein belongs to the heme-copper respiratory oxidase family. The cofactor is Cu(2+). It depends on heme as a cofactor.

The protein localises to the cell membrane. The enzyme catalyses 4 Fe(II)-[cytochrome c] + O2 + 8 H(+)(in) = 4 Fe(III)-[cytochrome c] + 2 H2O + 4 H(+)(out). It functions in the pathway energy metabolism; oxidative phosphorylation. In terms of biological role, cytochrome c oxidase is the component of the respiratory chain that catalyzes the reduction of oxygen to water. Subunits 1-3 form the functional core of the enzyme complex. Co I is the catalytic subunit of the enzyme. Electrons originating in cytochrome c are transferred via the copper A center of subunit 2 and heme a of subunit 1 to the bimetallic center formed by heme a3 and copper B. This cytochrome c oxidase shows proton pump activity across the membrane in addition to the electron transfer. In Bacillus subtilis (strain 168), this protein is Cytochrome c oxidase subunit 1 (ctaD).